Reading from the N-terminus, the 287-residue chain is Phosphatidylserine decarboxylase proenzyme (287 aa).

Catalysis depends on charge relay system; for autoendoproteolytic cleavage activity residues D90, H147, and S253. S253 acts as the Schiff-base intermediate with substrate; via pyruvic acid; for decarboxylase activity in catalysis. At S253 the chain carries Pyruvic acid (Ser); by autocatalysis.

Belongs to the phosphatidylserine decarboxylase family. PSD-B subfamily. Prokaryotic type I sub-subfamily. In terms of assembly, heterodimer of a large membrane-associated beta subunit and a small pyruvoyl-containing alpha subunit. It depends on pyruvate as a cofactor. In terms of processing, is synthesized initially as an inactive proenzyme. Formation of the active enzyme involves a self-maturation process in which the active site pyruvoyl group is generated from an internal serine residue via an autocatalytic post-translational modification. Two non-identical subunits are generated from the proenzyme in this reaction, and the pyruvate is formed at the N-terminus of the alpha chain, which is derived from the carboxyl end of the proenzyme. The autoendoproteolytic cleavage occurs by a canonical serine protease mechanism, in which the side chain hydroxyl group of the serine supplies its oxygen atom to form the C-terminus of the beta chain, while the remainder of the serine residue undergoes an oxidative deamination to produce ammonia and the pyruvoyl prosthetic group on the alpha chain. During this reaction, the Ser that is part of the protease active site of the proenzyme becomes the pyruvoyl prosthetic group, which constitutes an essential element of the active site of the mature decarboxylase.

The protein localises to the cell membrane. The enzyme catalyses a 1,2-diacyl-sn-glycero-3-phospho-L-serine + H(+) = a 1,2-diacyl-sn-glycero-3-phosphoethanolamine + CO2. It functions in the pathway phospholipid metabolism; phosphatidylethanolamine biosynthesis; phosphatidylethanolamine from CDP-diacylglycerol: step 2/2. Catalyzes the formation of phosphatidylethanolamine (PtdEtn) from phosphatidylserine (PtdSer). This Aliivibrio fischeri (strain ATCC 700601 / ES114) (Vibrio fischeri) protein is Phosphatidylserine decarboxylase proenzyme.